Here is a 335-residue protein sequence, read N- to C-terminus: Biotin synthase (335 aa).

The region spanning 50–279 (ADIQRAALLS…KARVRLSAGR (230 aa)) is the Radical SAM core domain. Residues C65, C69, and C72 each contribute to the [4Fe-4S] cluster site. The [2Fe-2S] cluster site is built by C110, C142, C202, and R274.

This sequence belongs to the radical SAM superfamily. Biotin synthase family. As to quaternary structure, homodimer. It depends on [4Fe-4S] cluster as a cofactor. The cofactor is [2Fe-2S] cluster.

The catalysed reaction is (4R,5S)-dethiobiotin + (sulfur carrier)-SH + 2 reduced [2Fe-2S]-[ferredoxin] + 2 S-adenosyl-L-methionine = (sulfur carrier)-H + biotin + 2 5'-deoxyadenosine + 2 L-methionine + 2 oxidized [2Fe-2S]-[ferredoxin]. It participates in cofactor biosynthesis; biotin biosynthesis; biotin from 7,8-diaminononanoate: step 2/2. Functionally, catalyzes the conversion of dethiobiotin (DTB) to biotin by the insertion of a sulfur atom into dethiobiotin via a radical-based mechanism. The polypeptide is Biotin synthase (Methylorubrum extorquens (strain CM4 / NCIMB 13688) (Methylobacterium extorquens)).